We begin with the raw amino-acid sequence, 205 residues long: Putative 3-methyladenine DNA glycosylase (205 aa).

Belongs to the DNA glycosylase MPG family.

The sequence is that of Putative 3-methyladenine DNA glycosylase from Bacillus cereus (strain G9842).